The following is a 434-amino-acid chain: Protein FAM83A (434 aa).

The tract at residues Met-1–Gly-298 is DUF1669. A disordered region spans residues Arg-76–Ser-97. Residues Ser-301, Ser-327, Ser-348, and Ser-357 each carry the phosphoserine modification. The segment at Val-308–Ser-399 is disordered. Low complexity-rich tracts occupy residues Ser-320–Ser-332 and Ser-348–Ser-357. A compositionally biased stretch (pro residues) spans Pro-358–Phe-369.

Belongs to the FAM83 family. Directly interacts (via DUF1669) with casein kinase isoforms CSNK1A1, CSNK1A1L, CSNK1D and CSNK1E. Post-translationally, phosphorylated upon EGFR activation in a breast cancer cell line.

Its subcellular location is the cytoplasm. Involved in mitochondrial maintenance during adipogenesis. May be acting by playing a role in the maintenance of normal mitochondrial function. This chain is Protein FAM83A, found in Homo sapiens (Human).